We begin with the raw amino-acid sequence, 113 residues long: MDSRQAAALLVLLLLIDGGCAEGPGGQQEDQLSAEEDSEPLPPQDAQTSGSLLHYLLQAMERPGRSQAFLFQPQRFGRNTQGSWRNEWLSPRAGEGLNSQFWSLAAPQRFGKK.

The signal sequence occupies residues 1 to 20 (MDSRQAAALLVLLLLIDGGC). A propeptide spanning residues 21 to 65 (AEGPGGQQEDQLSAEEDSEPLPPQDAQTSGSLLHYLLQAMERPGR) is cleaved from the precursor. Positions 22–48 (EGPGGQQEDQLSAEEDSEPLPPQDAQT) are disordered. Phe76 bears the Phenylalanine amide mark. Positions 79 to 92 (NTQGSWRNEWLSPR) are excised as a propeptide. At Phe110 the chain carries Phenylalanine amide.

Belongs to the FARP (FMRFamide related peptide) family.

Its subcellular location is the secreted. Functionally, morphine modulating peptides. Have wide-ranging physiologic effects, including the modulation of morphine-induced analgesia, elevation of arterial blood pressure, and increased somatostatin secretion from the pancreas. Neuropeptide FF potentiates and sensitizes ASIC1 and ASIC3 channels. This chain is Pro-FMRFamide-related neuropeptide FF, found in Homo sapiens (Human).